We begin with the raw amino-acid sequence, 1370 residues long: DNA-directed RNA polymerase subunit beta (1370 aa).

Belongs to the RNA polymerase beta chain family. In terms of assembly, the RNAP catalytic core consists of 2 alpha, 1 beta, 1 beta' and 1 omega subunit. When a sigma factor is associated with the core the holoenzyme is formed, which can initiate transcription.

It catalyses the reaction RNA(n) + a ribonucleoside 5'-triphosphate = RNA(n+1) + diphosphate. DNA-dependent RNA polymerase catalyzes the transcription of DNA into RNA using the four ribonucleoside triphosphates as substrates. This chain is DNA-directed RNA polymerase subunit beta, found in Bordetella parapertussis (strain 12822 / ATCC BAA-587 / NCTC 13253).